A 95-amino-acid chain; its full sequence is Aspartyl/glutamyl-tRNA(Asn/Gln) amidotransferase subunit C (95 aa).

This sequence belongs to the GatC family. In terms of assembly, heterotrimer of A, B and C subunits.

The catalysed reaction is L-glutamyl-tRNA(Gln) + L-glutamine + ATP + H2O = L-glutaminyl-tRNA(Gln) + L-glutamate + ADP + phosphate + H(+). It carries out the reaction L-aspartyl-tRNA(Asn) + L-glutamine + ATP + H2O = L-asparaginyl-tRNA(Asn) + L-glutamate + ADP + phosphate + 2 H(+). Functionally, allows the formation of correctly charged Asn-tRNA(Asn) or Gln-tRNA(Gln) through the transamidation of misacylated Asp-tRNA(Asn) or Glu-tRNA(Gln) in organisms which lack either or both of asparaginyl-tRNA or glutaminyl-tRNA synthetases. The reaction takes place in the presence of glutamine and ATP through an activated phospho-Asp-tRNA(Asn) or phospho-Glu-tRNA(Gln). This chain is Aspartyl/glutamyl-tRNA(Asn/Gln) amidotransferase subunit C, found in Rhizobium etli (strain ATCC 51251 / DSM 11541 / JCM 21823 / NBRC 15573 / CFN 42).